The sequence spans 571 residues: Proline--tRNA ligase (571 aa).

The protein belongs to the class-II aminoacyl-tRNA synthetase family. ProS type 1 subfamily. In terms of assembly, homodimer.

It is found in the cytoplasm. It carries out the reaction tRNA(Pro) + L-proline + ATP = L-prolyl-tRNA(Pro) + AMP + diphosphate. Catalyzes the attachment of proline to tRNA(Pro) in a two-step reaction: proline is first activated by ATP to form Pro-AMP and then transferred to the acceptor end of tRNA(Pro). As ProRS can inadvertently accommodate and process non-cognate amino acids such as alanine and cysteine, to avoid such errors it has two additional distinct editing activities against alanine. One activity is designated as 'pretransfer' editing and involves the tRNA(Pro)-independent hydrolysis of activated Ala-AMP. The other activity is designated 'posttransfer' editing and involves deacylation of mischarged Ala-tRNA(Pro). The misacylated Cys-tRNA(Pro) is not edited by ProRS. The sequence is that of Proline--tRNA ligase from Pseudomonas paraeruginosa (strain DSM 24068 / PA7) (Pseudomonas aeruginosa (strain PA7)).